Here is a 432-residue protein sequence, read N- to C-terminus: Adenylosuccinate synthetase (432 aa).

GTP contacts are provided by residues 12-18 (GDEGKGK) and 40-42 (GHT). The Proton acceptor role is filled by aspartate 13. Residues aspartate 13 and glycine 40 each contribute to the Mg(2+) site. IMP-binding positions include 13–16 (DEGK), 38–41 (NAGH), threonine 132, arginine 146, glutamine 226, threonine 241, and arginine 305. Catalysis depends on histidine 41, which acts as the Proton donor. Residue 301–307 (TVTGRKR) participates in substrate binding. GTP contacts are provided by residues arginine 307, 333–335 (KLD), and 415–417 (STS).

It belongs to the adenylosuccinate synthetase family. In terms of assembly, homodimer. It depends on Mg(2+) as a cofactor.

Its subcellular location is the cytoplasm. It catalyses the reaction IMP + L-aspartate + GTP = N(6)-(1,2-dicarboxyethyl)-AMP + GDP + phosphate + 2 H(+). It functions in the pathway purine metabolism; AMP biosynthesis via de novo pathway; AMP from IMP: step 1/2. Plays an important role in the de novo pathway of purine nucleotide biosynthesis. Catalyzes the first committed step in the biosynthesis of AMP from IMP. The sequence is that of Adenylosuccinate synthetase from Allorhizobium ampelinum (strain ATCC BAA-846 / DSM 112012 / S4) (Agrobacterium vitis (strain S4)).